Reading from the N-terminus, the 1004-residue chain is Kinesin-like protein KIN-7I (1004 aa).

A Kinesin motor domain is found at 6–326; the sequence is KILVSVRVRP…LLFATCAKEV (321 aa). Residue 89–96 coordinates ATP; the sequence is GQTSSGKT. 3 coiled-coil regions span residues 335–402, 517–576, and 634–661; these read VVSE…AQSR, KKEY…QKQS, and SVEK…DQSE. 3 disordered regions span residues 567–599, 628–671, and 802–830; these read EQSV…KSLP, SQQT…PEDE, and TMQH…GEKT. Composition is skewed to basic and acidic residues over residues 569–582 and 634–652; these read SVEK…KEEM and SVEK…EDLK. Positions 653 to 663 are enriched in polar residues; that stretch reads QNLSMDQSEQL. A Glycyl lysine isopeptide (Lys-Gly) (interchain with G-Cter in ubiquitin) cross-link involves residue Lys881.

Belongs to the TRAFAC class myosin-kinesin ATPase superfamily. Kinesin family. KIN-7 subfamily.

The protein is Kinesin-like protein KIN-7I of Arabidopsis thaliana (Mouse-ear cress).